The following is a 65-amino-acid chain: Defensin-B2 (65 aa).

The signal sequence occupies residues 1 to 23; sequence MEARVLLLCAVLFLLVHTPPAAG. 3 cysteine pairs are disulfide-bonded: C29–C56, C36–C50, and C40–C57.

Belongs to the beta-defensin family. In terms of tissue distribution, lowly expressed in spleen, and lung.

The protein resides in the secreted. In terms of biological role, has antimicrobial activity. The sequence is that of Defensin-B2 from Ornithorhynchus anatinus (Duckbill platypus).